Here is a 388-residue protein sequence, read N- to C-terminus: Chaperone protein DnaJ (388 aa).

A J domain is found at 4–69; sequence DYYDILGVDE…EKRQRYDQFG (66 aa). 3 stretches are compositionally biased toward basic and acidic residues: residues 27–50, 58–73, and 113–124; these read KAME…KEAS, DPEK…HDGV, and GRSERGRGRPGS. Disordered regions lie at residues 27–86 and 99–125; these read KAME…GRGR and SDIF…PGSD. The segment at 140-225 adopts a CR-type zinc-finger fold; sequence GTEKNLRLQK…CGGEGRVQGE (86 aa). Zn(2+) is bound by residues cysteine 153, cysteine 156, cysteine 173, cysteine 176, cysteine 199, cysteine 202, cysteine 213, and cysteine 216. CXXCXGXG motif repeat units lie at residues 153 to 160, 173 to 180, 199 to 206, and 213 to 220; these read CESCDGTG, CPKCDGTG, CPRCEGEG, and CDDCGGEG. The segment covering 362–376 has biased composition (basic and acidic residues); the sequence is AHDNFQPRPPEEDTQ. The tract at residues 362–388 is disordered; the sequence is AHDNFQPRPPEEDTQKSFFRRVSDVFS.

It belongs to the DnaJ family. In terms of assembly, homodimer. It depends on Zn(2+) as a cofactor.

The protein localises to the cytoplasm. Its function is as follows. Participates actively in the response to hyperosmotic and heat shock by preventing the aggregation of stress-denatured proteins and by disaggregating proteins, also in an autonomous, DnaK-independent fashion. Unfolded proteins bind initially to DnaJ; upon interaction with the DnaJ-bound protein, DnaK hydrolyzes its bound ATP, resulting in the formation of a stable complex. GrpE releases ADP from DnaK; ATP binding to DnaK triggers the release of the substrate protein, thus completing the reaction cycle. Several rounds of ATP-dependent interactions between DnaJ, DnaK and GrpE are required for fully efficient folding. Also involved, together with DnaK and GrpE, in the DNA replication of plasmids through activation of initiation proteins. The protein is Chaperone protein DnaJ of Salinibacter ruber (strain DSM 13855 / M31).